The chain runs to 713 residues: Phenylalanine ammonia-lyase (713 aa).

Y116 serves as the catalytic Proton donor/acceptor. The segment at residues 217-219 (ASG) is a cross-link (5-imidazolinone (Ala-Gly)). S218 carries the post-translational modification 2,3-didehydroalanine (Ser). 7 residues coordinate (E)-cinnamate: N272, Q362, R368, N399, K470, E498, and N501.

Belongs to the PAL/histidase family. As to quaternary structure, homotetramer. In terms of processing, contains an active site 4-methylidene-imidazol-5-one (MIO), which is formed autocatalytically by cyclization and dehydration of residues Ala-Ser-Gly.

Its subcellular location is the cytoplasm. It catalyses the reaction L-phenylalanine = (E)-cinnamate + NH4(+). It functions in the pathway phenylpropanoid metabolism; trans-cinnamate biosynthesis; trans-cinnamate from L-phenylalanine: step 1/1. Catalyzes the non-oxidative deamination of L-phenylalanine to form trans-cinnamic acid and a free ammonium ion. Facilitates the commitment step in phenylpropanoid pathways that produce secondary metabolites such as lignins, coumarins and flavonoids. This Rhodotorula mucilaginosa (Yeast) protein is Phenylalanine ammonia-lyase (PAL).